The primary structure comprises 286 residues: tRNA pseudouridine synthase A (286 aa).

Aspartate 60 acts as the Nucleophile in catalysis. Substrate is bound at residue tyrosine 132.

The protein belongs to the tRNA pseudouridine synthase TruA family. Homodimer.

The enzyme catalyses uridine(38/39/40) in tRNA = pseudouridine(38/39/40) in tRNA. Its function is as follows. Formation of pseudouridine at positions 38, 39 and 40 in the anticodon stem and loop of transfer RNAs. The sequence is that of tRNA pseudouridine synthase A from Mycobacterium leprae (strain TN).